We begin with the raw amino-acid sequence, 424 residues long: Satellite RNA 48 kDa protein (424 aa).

The tract at residues 51–83 (PRDGGGRKRKADGSQGRPSNNPGRPSRKWTEKT) is disordered.

The protein belongs to the nepovirus satellite RNA 48 kDa protein family.

The sequence is that of Satellite RNA 48 kDa protein from Tomato black ring virus (strain L) (TBRV).